Reading from the N-terminus, the 363-residue chain is Two-pore potassium channel 1 (363 aa).

A disordered region spans residues 1–61; the sequence is MSSDAARTPL…DDVKIDEPPP (61 aa). Residues 1-78 lie on the Cytoplasmic side of the membrane; that stretch reads MSSDAARTPL…FSDLNPNLRR (78 aa). Over residues 31 to 42 the composition is skewed to basic residues; it reads SSRKRRLRRSRS. Residues 79–99 form a helical membrane-spanning segment; sequence VIMFLALYLTIGTLCFYLVRD. The segment at residues 111-130 is an intramembrane region (pore-forming); the sequence is DALYFCIVTMTTVGYGDLVP. Residues 137–157 form a helical membrane-spanning segment; it reads LLACAFVFSGMVLVGHLLSRA. Topologically, residues 158–197 are cytoplasmic; it reads ADYLVEKQEALLVRAFHLRQSFGPTDILKELHTNKLRYKC. A helical membrane pass occupies residues 198-218; it reads YATCLVLVVLFIVGTIFLVMV. The pore-forming intramembrane region spans 225–244; that stretch reads SAFYCVCSTVTTLGYGDKSF. The helical transmembrane segment at 251–271 threads the bilayer; that stretch reads LFAVFWILTSSICLAQFFLYV. Residues 272–363 are Cytoplasmic-facing; sequence AELNTENKQR…LAQTTSQIQR (92 aa). 2 consecutive EF-hand domains span residues 288–323 and 327–362; these read LTRRITNNDLEAADLDEDGVVGAAEFIVYKLKEMGK and KDISGIMDEFEQLDYDESGTLTTSDIVLAQTTSQIQ. Residues 296–298 carry the Endoplasmic reticulum release signal motif; that stretch reads DLE. Positions 301, 303, 305, 312, 340, 342, 344, 346, and 351 each coordinate Ca(2+).

This sequence belongs to the two pore domain potassium channel (TC 1.A.1.7) family. As to quaternary structure, homodimer. Interacts with GRF1 and GRF6, but only GRF6 modulates the channel activity. Phosphorylation at Ser-42 increases and stabilizes the interaction with 14-3-3 proteins. Detected in mesophyll cells, guard cells and vascular tissues of the leaves. Expressed in the hilum, where the funiculus is attached during fruit maturation and in the embryo. Also expressed at a lower level in seedlings, root tips and elongation zones, and flowers. Could be detected in mitotically active tissues.

The protein resides in the vacuole membrane. Its activity is regulated as follows. Could be activated by protein kinase C. Strongly induced by calcium. Blocked by barium, tetraethylammonium (TEA), quinine and quinidine. Voltage-independent, large conductance and potassium-selective tonoplast ion channel. Regulated by cytoplasmic calcium and pH. Does not mediate slow-vacuolar (SV) ionic currents, but essential to establish VK currents. Has some permeability for Rb(+) and NH(4)(+), but none for Na(+), Cs(+) or Li(+). Involved in intracellular K(+) redistribution and/or K(+) retranslocation between different tissues. This chain is Two-pore potassium channel 1 (TPK1), found in Arabidopsis thaliana (Mouse-ear cress).